A 536-amino-acid polypeptide reads, in one-letter code: G-protein coupled receptor Mth2 (536 aa).

Intrachain disulfides connect C17/C71, C73/C78, C82/C177, C83/C96, and C138/C197. N24 and N33 each carry an N-linked (GlcNAc...) asparagine glycan. Residues N103, N113, N118, N159, and N184 are each glycosylated (N-linked (GlcNAc...) asparagine). A helical transmembrane segment spans residues 212–232; sequence YAMMFSIPFMMLTIAVYLLIP. Over 233–241 the chain is Cytoplasmic; it reads ELRNQHGKS. A helical membrane pass occupies residues 242–262; the sequence is LVCYLIGLTVGYSSLCYVQLY. At 263 to 273 the chain is on the extracellular side; that stretch reads QVDATGVTCKV. A helical transmembrane segment spans residues 274–294; that stretch reads FGYTAYFFFMGAYMWLSVISF. The Cytoplasmic portion of the chain corresponds to 295–314; that stretch reads DLWHNFRGTRGINRFQEKKR. A helical transmembrane segment spans residues 315 to 335; sequence FLFYSLYSWGIALVFLAFTYC. Residues 336–365 are Extracellular-facing; sequence AQQLSNLPDNLKPGIGDGVYCWLDMSNWAA. A helical transmembrane segment spans residues 366 to 386; the sequence is MIYFYGPILAIVVANTIMFIM. The Cytoplasmic segment spans residues 387–417; it reads TAIKIHGVQREMARIIASENSTKNLRTEKDK. The helical transmembrane segment at 418-438 threads the bilayer; sequence FGLFLRLFLIMGITWLTELIS. Over 439 to 449 the chain is Extracellular; it reads YFVGSDKGWSK. The chain crosses the membrane as a helical span at residues 450–470; that stretch reads LFYISDLANAMQGFLIFMLFV. Residues 471 to 536 are Cytoplasmic-facing; the sequence is MKKKVKHLIT…VDPQKTTIFR (66 aa). The interval 487 to 506 is disordered; that stretch reads RDGSNQRQSQYSTKTTSSSV. The segment covering 492–505 has biased composition (low complexity); the sequence is QRQSQYSTKTTSSS.

The protein belongs to the G-protein coupled receptor 2 family. Mth subfamily. In terms of assembly, homodimer.

It localises to the cell membrane. Its function is as follows. Involved in biological aging and stress response. Essential for adult survival. This is G-protein coupled receptor Mth2 (mth2) from Drosophila simulans (Fruit fly).